A 716-amino-acid polypeptide reads, in one-letter code: Penicillin-binding protein 2A (716 aa).

The chain crosses the membrane as a helical span at residues 22–42 (LNILFLAAFVIFTWIIVELGI). Catalysis depends on Ser-397, which acts as the Acyl-ester intermediate. Residues 689-706 (SKQDKEGTQQKNKDKIEE) are compositionally biased toward basic and acidic residues. Residues 689–716 (SKQDKEGTQQKNKDKIEENAENTTSSDN) are disordered.

Belongs to the transpeptidase family.

The protein resides in the cell membrane. Its subcellular location is the forespore inner membrane. It catalyses the reaction Preferential cleavage: (Ac)2-L-Lys-D-Ala-|-D-Ala. Also transpeptidation of peptidyl-alanyl moieties that are N-acyl substituents of D-alanine.. Its pathway is cell wall biogenesis; peptidoglycan biosynthesis. Functionally, involved in the synthesis of peptidoglycan associated with cell wall elongation, especially following spore germination. Has a partially redundant function with PBP 1 (ponA) or PBP 4 (pbpD) during spore outgrowth. Plays a redundant role with PbpH in determining the rod shape of the cell during vegetative growth and spore outgrowth. This is Penicillin-binding protein 2A from Bacillus subtilis (strain 168).